Here is a 1083-residue protein sequence, read N- to C-terminus: Ubiquitin carboxyl-terminal hydrolase 1 (1083 aa).

The UBP-type zinc-finger motif lies at 30–165 (RSCVHFDKYV…KKDLLLEVVK (136 aa)). Residues cysteine 32, histidine 34, cysteine 56, cysteine 59, cysteine 95, cysteine 98, cysteine 103, histidine 115, histidine 119, histidine 125, cysteine 139, and cysteine 142 each contribute to the Zn(2+) site. One can recognise a USP domain in the interval 202–1083 (RGLVNLGNTC…EAYILFYERI (882 aa)). Residue cysteine 211 is the Nucleophile of the active site. 2 disordered regions span residues 387–424 (KDSE…DNET) and 450–486 (GSTE…ASGI). 2 stretches are compositionally biased toward basic and acidic residues: residues 409–419 (SDHKIQSRPET) and 455–473 (LMHD…EDVR). Over residues 474 to 485 (ATQSNEETSASG) the composition is skewed to polar residues. Histidine 1029 functions as the Proton acceptor in the catalytic mechanism.

The protein belongs to the peptidase C19 family.

It carries out the reaction Thiol-dependent hydrolysis of ester, thioester, amide, peptide and isopeptide bonds formed by the C-terminal Gly of ubiquitin (a 76-residue protein attached to proteins as an intracellular targeting signal).. Recognizes and hydrolyzes the peptide bond at the C-terminal Gly of ubiquitin. Involved in the processing of poly-ubiquitin precursors as well as that of ubiquitinated proteins. Is involved in resistance to the arginine analog canavanine (CAN). The chain is Ubiquitin carboxyl-terminal hydrolase 1 (UBP1) from Arabidopsis thaliana (Mouse-ear cress).